A 90-amino-acid chain; its full sequence is Long neurotoxin OH-34 (90 aa).

Positions 1–20 are cleaved as a signal peptide; the sequence is KTLLLTLVVVTILCLDLGYT. 5 disulfide bridges follow: Cys-23-Cys-41, Cys-34-Cys-62, Cys-47-Cys-51, Cys-66-Cys-77, and Cys-78-Cys-83.

It belongs to the three-finger toxin family. Long-chain subfamily. Type II alpha-neurotoxin sub-subfamily. Expressed by the venom gland.

The protein localises to the secreted. Functionally, binds with high affinity to muscular (alpha-1/CHRNA1) and neuronal (alpha-7/CHRNA7) nicotinic acetylcholine receptor (nAChR) and inhibits acetylcholine from binding to the receptor, thereby impairing neuromuscular and neuronal transmission. This chain is Long neurotoxin OH-34, found in Ophiophagus hannah (King cobra).